Here is a 407-residue protein sequence, read N- to C-terminus: 1-deoxy-D-xylulose 5-phosphate reductoisomerase (407 aa).

Residues threonine 25, glycine 26, serine 27, isoleucine 28, asparagine 53, and asparagine 136 each coordinate NADPH. Lysine 137 lines the 1-deoxy-D-xylulose 5-phosphate pocket. NADPH is bound at residue glutamate 138. Aspartate 162 lines the Mn(2+) pocket. Serine 163, glutamate 164, serine 188, and histidine 211 together coordinate 1-deoxy-D-xylulose 5-phosphate. Mn(2+) is bound at residue glutamate 164. Glycine 217 serves as a coordination point for NADPH. Serine 224, asparagine 229, lysine 230, and glutamate 233 together coordinate 1-deoxy-D-xylulose 5-phosphate. Glutamate 233 lines the Mn(2+) pocket.

It belongs to the DXR family. The cofactor is Mg(2+). Requires Mn(2+) as cofactor.

It carries out the reaction 2-C-methyl-D-erythritol 4-phosphate + NADP(+) = 1-deoxy-D-xylulose 5-phosphate + NADPH + H(+). Its pathway is isoprenoid biosynthesis; isopentenyl diphosphate biosynthesis via DXP pathway; isopentenyl diphosphate from 1-deoxy-D-xylulose 5-phosphate: step 1/6. Its function is as follows. Catalyzes the NADPH-dependent rearrangement and reduction of 1-deoxy-D-xylulose-5-phosphate (DXP) to 2-C-methyl-D-erythritol 4-phosphate (MEP). In Rhodopseudomonas palustris (strain BisA53), this protein is 1-deoxy-D-xylulose 5-phosphate reductoisomerase.